We begin with the raw amino-acid sequence, 694 residues long: Threonine--tRNA ligase (694 aa).

The 67-residue stretch at 8–74 (NFVNTSVTTH…EETATFTAVP (67 aa)) folds into the TGS domain. The catalytic stretch occupies residues 273–579 (DHRRLGTELD…LLEHYAGAFP (307 aa)). Residues Cys378, His429, and His556 each contribute to the Zn(2+) site.

This sequence belongs to the class-II aminoacyl-tRNA synthetase family. In terms of assembly, homodimer. Zn(2+) is required as a cofactor.

The protein resides in the cytoplasm. It catalyses the reaction tRNA(Thr) + L-threonine + ATP = L-threonyl-tRNA(Thr) + AMP + diphosphate + H(+). In terms of biological role, catalyzes the attachment of threonine to tRNA(Thr) in a two-step reaction: L-threonine is first activated by ATP to form Thr-AMP and then transferred to the acceptor end of tRNA(Thr). Also edits incorrectly charged L-seryl-tRNA(Thr). This Corynebacterium efficiens (strain DSM 44549 / YS-314 / AJ 12310 / JCM 11189 / NBRC 100395) protein is Threonine--tRNA ligase.